The primary structure comprises 259 residues: Acyl-[acyl-carrier-protein]--UDP-N-acetylglucosamine O-acyltransferase (259 aa).

This sequence belongs to the transferase hexapeptide repeat family. LpxA subfamily. In terms of assembly, homotrimer.

The protein resides in the cytoplasm. The catalysed reaction is a (3R)-hydroxyacyl-[ACP] + UDP-N-acetyl-alpha-D-glucosamine = a UDP-3-O-[(3R)-3-hydroxyacyl]-N-acetyl-alpha-D-glucosamine + holo-[ACP]. It functions in the pathway glycolipid biosynthesis; lipid IV(A) biosynthesis; lipid IV(A) from (3R)-3-hydroxytetradecanoyl-[acyl-carrier-protein] and UDP-N-acetyl-alpha-D-glucosamine: step 1/6. In terms of biological role, involved in the biosynthesis of lipid A, a phosphorylated glycolipid that anchors the lipopolysaccharide to the outer membrane of the cell. In Psychrobacter cryohalolentis (strain ATCC BAA-1226 / DSM 17306 / VKM B-2378 / K5), this protein is Acyl-[acyl-carrier-protein]--UDP-N-acetylglucosamine O-acyltransferase.